A 280-amino-acid polypeptide reads, in one-letter code: uncharacterized protein (280 aa).

A compositionally biased stretch (basic residues) spans 1 to 10 (MSSSIKKLKK). Residues 1–45 (MSSSIKKLKKDTKDTDKTPSKKIYQETHNSEDSEDSEDSDNENNT) are disordered. Residues 11 to 31 (DTKDTDKTPSKKIYQETHNSE) show a composition bias toward basic and acidic residues. Residues 32-41 (DSEDSEDSDN) show a composition bias toward acidic residues.

This is an uncharacterized protein from Acanthamoeba polyphaga mimivirus (APMV).